Here is a 54-residue protein sequence, read N- to C-terminus: Lectin alpha-1 chain (54 aa).

It belongs to the leguminous lectin family. Tetramer of two alpha and two beta chains.

In Lathyrus hirsutus (Rough pea), this protein is Lectin alpha-1 chain.